Consider the following 227-residue polypeptide: MARGKIQIKRIENQTNRQVTYSKRRNGLFKKAHELSVLCDAKVSIIMISSTQKLHEYISPTTATKQLFDQYQKAVGVDLWSSHYEKMQEHLKKLNEVNRNLRREIRQRMGESLNDLGYEQIVNLIEDMDNSLKLIRERKYKVISNQIDTSKKKVRNVEEIHRNLVLEFDARREDPHFGLVDNEGDYNSVLGFPNGGPRIIALRLPTNHHPTLHSGGGSDLTTFALLE.

Residues 3 to 57 form the MADS-box domain; sequence RGKIQIKRIENQTNRQVTYSKRRNGLFKKAHELSVLCDAKVSIIMISSTQKLHEY. One can recognise a K-box domain in the interval 84 to 174; it reads YEKMQEHLKK…VLEFDARRED (91 aa).

The protein localises to the nucleus. Its function is as follows. Transcription factor involved in the genetic control of flower development. Acts in conjunction with GLOBOSA (glo). In Antirrhinum majus (Garden snapdragon), this protein is Floral homeotic protein DEFICIENS (DEFA).